Consider the following 835-residue polypeptide: MTDEAEDSGPGGYAAARLRLLTEGARSGPPRRRALAELTDGWLAGLFGAATEEHTGISLVAVGGYGRGELSPRSDLDLLLLHDGRDDKAVAALADRLWYPVWDLGIDLDHSVRTPQQARKTAGQDLKVHLGLLDARHLAGDLGLTASLRTAVLADWRNQAPKRLPELRDLCAERAERQGELQFLLEPDLKEARGGLRDATALRAVAASWLADAPREGLAEARRRLLDVRDALHLATGRATDRLALQEQDQVAAELGLLDADALLRQVYEAARVISYAGDVTWREVGRVLRSRSVRPRLRAMMNGRNGGKPVAERSPLAEGVVEQDGEAVLARTARPERDPALPLRAAAAAAQAGLPLSRHAVRRLAATARPLPTPWPAEAREQLVTLLGSGRPTVQVWEALEAEGLVTRLLPDWERVRCRPQRNAVHLWTVDRHLIETAVRAAGFTRRVHRPDLLLIAALLHDIGKGWPGDHSVAGETIARDVAARIGFDGADTAVLATLVRHHLLLVETATRRDLDDPATVRAVAQAVGTEHTLELLHALTEADALATGPAAWSSWRGSLVADLVKRVSGVLAGEPQPEAESAAPTAEQERLAVEAFRTGGPVLALRAQTEPPADSAPAPSSPSSPSFPSPLSSPSSPSSADGPEPLGVELLIAVPDQAGVLPAVAGVLAMHRLTVRTAELRSVPLPDGVEGSVLLLDWRVAAQYGSLPQAARLRADLVRALDGTLDIAARLAERDAAHPRRRGVEPPPPRVTVAPAASRLATVIEVRAQDAPGLLFRLGRALEAAGVRVRSAHVSTLGANAVDAFYVTRGEGTPLPGDEAASVARGLEESLRT.

The interval 1–316 is uridylyltransferase; that stretch reads MTDEAEDSGP…GGKPVAERSP (316 aa). Residues 317-650 form a uridylyl-removing region; it reads LAEGVVEQDG…SADGPEPLGV (334 aa). The HD domain maps to 431–554; sequence VDRHLIETAV…DALATGPAAW (124 aa). The interval 610-645 is disordered; that stretch reads QTEPPADSAPAPSSPSSPSFPSPLSSPSSPSSADGP. Positions 621-630 are enriched in pro residues; the sequence is PSSPSSPSFP. A compositionally biased stretch (low complexity) spans 631-642; the sequence is SPLSSPSSPSSA. 2 consecutive ACT domains span residues 651 to 736 and 765 to 835; these read ELLI…LAER and VIEV…SLRT.

It belongs to the GlnD family. It depends on Mg(2+) as a cofactor.

It catalyses the reaction [protein-PII]-L-tyrosine + UTP = [protein-PII]-uridylyl-L-tyrosine + diphosphate. It carries out the reaction [protein-PII]-uridylyl-L-tyrosine + H2O = [protein-PII]-L-tyrosine + UMP + H(+). With respect to regulation, uridylyltransferase (UTase) activity is inhibited by glutamine, while glutamine activates uridylyl-removing (UR) activity. Functionally, modifies, by uridylylation and deuridylylation, the PII regulatory proteins (GlnB and homologs), in response to the nitrogen status of the cell that GlnD senses through the glutamine level. Under low glutamine levels, catalyzes the conversion of the PII proteins and UTP to PII-UMP and PPi, while under higher glutamine levels, GlnD hydrolyzes PII-UMP to PII and UMP (deuridylylation). Thus, controls uridylylation state and activity of the PII proteins, and plays an important role in the regulation of nitrogen assimilation and metabolism. The polypeptide is Bifunctional uridylyltransferase/uridylyl-removing enzyme (Streptomyces coelicolor (strain ATCC BAA-471 / A3(2) / M145)).